A 286-amino-acid chain; its full sequence is Shikimate dehydrogenase (NADP(+)) (286 aa).

Shikimate contacts are provided by residues Ser-22 to Ser-24 and Thr-71. Residue Lys-75 is the Proton acceptor of the active site. Residue Glu-87 coordinates NADP(+). Residues Asn-96 and Asp-111 each coordinate shikimate. Residues Gly-136 to Ala-140, Asn-160 to Arg-165, and Ile-225 contribute to the NADP(+) site. Tyr-227 serves as a coordination point for shikimate. Gly-248 contacts NADP(+).

This sequence belongs to the shikimate dehydrogenase family. As to quaternary structure, homodimer.

The enzyme catalyses shikimate + NADP(+) = 3-dehydroshikimate + NADPH + H(+). The protein operates within metabolic intermediate biosynthesis; chorismate biosynthesis; chorismate from D-erythrose 4-phosphate and phosphoenolpyruvate: step 4/7. Involved in the biosynthesis of the chorismate, which leads to the biosynthesis of aromatic amino acids. Catalyzes the reversible NADPH linked reduction of 3-dehydroshikimate (DHSA) to yield shikimate (SA). This Rhizobium meliloti (strain 1021) (Ensifer meliloti) protein is Shikimate dehydrogenase (NADP(+)).